The following is a 401-amino-acid chain: Phosphoglycerate kinase, cytosolic (401 aa).

(2R)-3-phosphoglycerate is bound by residues Ala-24, Asp-25, Asn-27, Arg-41, Ser-63, His-64, Gly-66, Arg-67, Arg-122, His-154, and Arg-155. Gly-200 is a binding site for ADP. Gly-200 is a binding site for CDP. The AMP site is built by Lys-202 and Lys-206. Lys-206 serves as a coordination point for ATP. Gly-224 contributes to the ADP binding site. Gly-224 is a CDP binding site. Gly-225 and Gly-297 together coordinate AMP. Positions 225 and 297 each coordinate ATP. Residues Gly-322 and Phe-327 each coordinate CDP. Phe-327 is an ADP binding site. Glu-328 provides a ligand contact to AMP. ATP contacts are provided by Glu-328, Asp-359, and Ser-360. Asp-359 lines the Mg(2+) pocket.

This sequence belongs to the phosphoglycerate kinase family. In terms of assembly, monomer. The cofactor is Mg(2+).

The protein localises to the cytoplasm. It carries out the reaction (2R)-3-phosphoglycerate + ATP = (2R)-3-phospho-glyceroyl phosphate + ADP. The protein operates within carbohydrate degradation; glycolysis; pyruvate from D-glyceraldehyde 3-phosphate: step 2/5. This is Phosphoglycerate kinase, cytosolic from Triticum aestivum (Wheat).